We begin with the raw amino-acid sequence, 526 residues long: tRNA (guanine(26)-N(2))-dimethyltransferase (526 aa).

Positions methionine 1–aspartate 10 are enriched in polar residues. The disordered stretch occupies residues methionine 1 to glutamate 20. In terms of domain architecture, Trm1 methyltransferase spans threonine 22–tyrosine 441. Residues arginine 47, arginine 104, and aspartate 122 each contribute to the S-adenosyl-L-methionine site. Zn(2+) is bound by residues cysteine 286, cysteine 289, cysteine 325, and cysteine 328. The disordered stretch occupies residues lysine 498–glutamate 526.

Belongs to the class I-like SAM-binding methyltransferase superfamily. Trm1 family.

It catalyses the reaction guanosine(26) in tRNA + 2 S-adenosyl-L-methionine = N(2)-dimethylguanosine(26) in tRNA + 2 S-adenosyl-L-homocysteine + 2 H(+). Its function is as follows. Dimethylates a single guanine residue at position 26 of most tRNAs using S-adenosyl-L-methionine as donor of the methyl groups. This chain is tRNA (guanine(26)-N(2))-dimethyltransferase (trm-1), found in Caenorhabditis elegans.